A 430-amino-acid polypeptide reads, in one-letter code: Adenylosuccinate synthetase (430 aa).

GTP-binding positions include 12-18 and 40-42; these read GDEGKGK and GHT. Asp-13 serves as the catalytic Proton acceptor. Mg(2+) contacts are provided by Asp-13 and Gly-40. IMP-binding positions include 13–16, 38–41, Thr-128, Arg-142, Gln-223, Thr-238, and Arg-302; these read DEGK and NAGH. Residue His-41 is the Proton donor of the active site. Residue 298–304 participates in substrate binding; that stretch reads TTTGRPR. Residues Arg-304, 330–332, and 413–415 each bind GTP; these read SID and SVG.

It belongs to the adenylosuccinate synthetase family. Homodimer. Mg(2+) is required as a cofactor.

The protein localises to the cytoplasm. It catalyses the reaction IMP + L-aspartate + GTP = N(6)-(1,2-dicarboxyethyl)-AMP + GDP + phosphate + 2 H(+). The protein operates within purine metabolism; AMP biosynthesis via de novo pathway; AMP from IMP: step 1/2. Plays an important role in the de novo pathway of purine nucleotide biosynthesis. Catalyzes the first committed step in the biosynthesis of AMP from IMP. The chain is Adenylosuccinate synthetase from Lactococcus lactis subsp. cremoris (strain SK11).